Here is a 263-residue protein sequence, read N- to C-terminus: 4-hydroxy-2-oxo-heptane-1,7-dioate aldolase (263 aa).

Histidine 45 (proton acceptor) is an active-site residue. Glutamine 147 contributes to the substrate binding site. Residue glutamate 149 coordinates a divalent metal cation. Substrate-binding residues include alanine 174 and aspartate 175. Aspartate 175 serves as a coordination point for a divalent metal cation.

This sequence belongs to the HpcH/HpaI aldolase family. Homohexamer; trimer of dimers. Requires a divalent metal cation as cofactor.

It catalyses the reaction 4-hydroxy-2-oxoheptanedioate = succinate semialdehyde + pyruvate. It functions in the pathway aromatic compound metabolism; 4-hydroxyphenylacetate degradation; pyruvate and succinate semialdehyde from 4-hydroxyphenylacetate: step 7/7. Functionally, catalyzes the reversible retro-aldol cleavage of 4-hydroxy-2-ketoheptane-1,7-dioate (HKHD) to pyruvate and succinic semialdehyde. The polypeptide is 4-hydroxy-2-oxo-heptane-1,7-dioate aldolase (Salmonella choleraesuis (strain SC-B67)).